A 379-amino-acid polypeptide reads, in one-letter code: Cobalt-precorrin-5B C(1)-methyltransferase (379 aa).

It belongs to the CbiD family.

It catalyses the reaction Co-precorrin-5B + S-adenosyl-L-methionine = Co-precorrin-6A + S-adenosyl-L-homocysteine. It functions in the pathway cofactor biosynthesis; adenosylcobalamin biosynthesis; cob(II)yrinate a,c-diamide from sirohydrochlorin (anaerobic route): step 6/10. Its function is as follows. Catalyzes the methylation of C-1 in cobalt-precorrin-5B to form cobalt-precorrin-6A. In Citrobacter koseri (strain ATCC BAA-895 / CDC 4225-83 / SGSC4696), this protein is Cobalt-precorrin-5B C(1)-methyltransferase.